The primary structure comprises 744 residues: MADDGMLLNFDLGSGPVKPQVKFKGGRWRDRKQAEKSARIASGKQSQPKSSTDGPDDGRSSKRQRTDDGDFDNGFDYKSANRFGSRPKHFDNDGHGGASGQSRSHQSDGKSKQVISRLFSFNPAQKTEADEKQGEWTAPEATNAPLSDVANFGTLTISARLVDELGKMGLERPTGIQNKVIPHMLTSSSDAFVQAETGSGKTLAYLLPILHRVLLLSVKGGAQIHRDSGAFAIIVAPTRELAKQVHTVLEKLIRPFPWLVSTAITGGESKKAEKARIRKGVNFLVATPGRLADHIDNTKALNLSIVRWLILDEGDRLMDLGFEDDLKKVITALKAVDVSDTLPDGTPLKALPERRVTVLCSATMKMNVQKLGEMSLADATFLAAKKEDMELDVQKSEMKAPAQLHQYYSVVPAKLRLVTLISYLKSTFSRRGKTMKAIIFISCADSVDFHYELLRDPNTTEAPVAASKEAESISKTVSKAAYITSPASPEVVLHRMHGSLSQPIRTATLKSFSACKSPSLLITTDVSSRGLDIPSVDLVIEYDPAFSFADHIHRVGRTARAGKPGDALLFLLPGTEEGYIELMKGSTTPTSQSYDSILQKGMMTKLEFPVETTAKPEDGHSFHDKAESLQLHIEQRLLEDTKRLELARNGFKSHIRAYATHTKEERKHFDISELHLGHTAKSYGLREAPGGIGQGVERKTKKRTNKGVEKDPEQAAGDERQNQNIIRKKSMMLMNSAADEFNIG.

The tract at residues 1–113 (MADDGMLLNF…SHQSDGKSKQ (113 aa)) is disordered. Residues 27-38 (RWRDRKQAEKSA) show a composition bias toward basic and acidic residues. The segment covering 43 to 53 (GKQSQPKSSTD) has biased composition (polar residues). Residues 56 to 68 (DDGRSSKRQRTDD) are compositionally biased toward basic and acidic residues. The Q motif motif lies at 150-178 (ANFGTLTISARLVDELGKMGLERPTGIQN). The Helicase ATP-binding domain occupies 182 to 382 (PHMLTSSSDA…EMSLADATFL (201 aa)). 195–202 (AETGSGKT) lines the ATP pocket. The short motif at 312 to 315 (DEGD) is the DEAD box element. The region spanning 416–614 (RLVTLISYLK…KLEFPVETTA (199 aa)) is the Helicase C-terminal domain. Residues 685-724 (LREAPGGIGQGVERKTKKRTNKGVEKDPEQAAGDERQNQN) form a disordered region. Positions 706 to 721 (KGVEKDPEQAAGDERQ) are enriched in basic and acidic residues.

It belongs to the DEAD box helicase family. DDX31/DBP7 subfamily.

It is found in the nucleus. It localises to the nucleolus. It catalyses the reaction ATP + H2O = ADP + phosphate + H(+). ATP-binding RNA helicase involved in the biogenesis of 60S ribosomal subunits and is required for the normal formation of 25S and 5.8S rRNAs. The protein is ATP-dependent RNA helicase DBP7 (DBP7) of Gibberella zeae (strain ATCC MYA-4620 / CBS 123657 / FGSC 9075 / NRRL 31084 / PH-1) (Wheat head blight fungus).